The sequence spans 209 residues: Small ribosomal subunit protein uS4 (209 aa).

The tract at residues 23-46 (SRNPLLKKPHPPGQHGMQRKKKSD) is disordered. The S4 RNA-binding domain occupies 93-156 (CRLDNMVYRM…RKLQSVQESL (64 aa)).

It belongs to the universal ribosomal protein uS4 family. In terms of assembly, part of the 30S ribosomal subunit. Contacts protein S5. The interaction surface between S4 and S5 is involved in control of translational fidelity.

One of the primary rRNA binding proteins, it binds directly to 16S rRNA where it nucleates assembly of the body of the 30S subunit. Functionally, with S5 and S12 plays an important role in translational accuracy. In Chlamydia felis (strain Fe/C-56) (Chlamydophila felis), this protein is Small ribosomal subunit protein uS4.